We begin with the raw amino-acid sequence, 114 residues long: Large ribosomal subunit protein uL22 (114 aa).

The protein belongs to the universal ribosomal protein uL22 family. As to quaternary structure, part of the 50S ribosomal subunit.

In terms of biological role, this protein binds specifically to 23S rRNA; its binding is stimulated by other ribosomal proteins, e.g. L4, L17, and L20. It is important during the early stages of 50S assembly. It makes multiple contacts with different domains of the 23S rRNA in the assembled 50S subunit and ribosome. Its function is as follows. The globular domain of the protein is located near the polypeptide exit tunnel on the outside of the subunit, while an extended beta-hairpin is found that lines the wall of the exit tunnel in the center of the 70S ribosome. The protein is Large ribosomal subunit protein uL22 of Streptococcus agalactiae serotype Ia (strain ATCC 27591 / A909 / CDC SS700).